A 269-amino-acid polypeptide reads, in one-letter code: 5'-nucleotidase SurE (269 aa).

The a divalent metal cation site is built by Asp-11, Asp-12, Ser-43, and Asn-101.

Belongs to the SurE nucleotidase family. A divalent metal cation serves as cofactor.

It localises to the cytoplasm. The catalysed reaction is a ribonucleoside 5'-phosphate + H2O = a ribonucleoside + phosphate. Nucleotidase that shows phosphatase activity on nucleoside 5'-monophosphates. This chain is 5'-nucleotidase SurE, found in Prochlorococcus marinus (strain MIT 9301).